A 129-amino-acid chain; its full sequence is Small ribosomal subunit protein uS11 (129 aa).

This sequence belongs to the universal ribosomal protein uS11 family. Part of the 30S ribosomal subunit. Interacts with proteins S7 and S18. Binds to IF-3.

Functionally, located on the platform of the 30S subunit, it bridges several disparate RNA helices of the 16S rRNA. Forms part of the Shine-Dalgarno cleft in the 70S ribosome. The protein is Small ribosomal subunit protein uS11 of Marinobacter nauticus (strain ATCC 700491 / DSM 11845 / VT8) (Marinobacter aquaeolei).